The sequence spans 104 residues: L-rhamnose mutarotase (104 aa).

Residue Tyr18 participates in substrate binding. His22 (proton donor) is an active-site residue. Residues Tyr41 and Trp76–Trp77 contribute to the substrate site.

The protein belongs to the rhamnose mutarotase family. Homodimer.

Its subcellular location is the cytoplasm. It carries out the reaction alpha-L-rhamnose = beta-L-rhamnose. It participates in carbohydrate metabolism; L-rhamnose metabolism. Its function is as follows. Involved in the anomeric conversion of L-rhamnose. The sequence is that of L-rhamnose mutarotase from Opitutus terrae (strain DSM 11246 / JCM 15787 / PB90-1).